The following is a 221-amino-acid chain: Uracil-DNA glycosylase (221 aa).

Asp-64 (proton acceptor) is an active-site residue.

The protein belongs to the uracil-DNA glycosylase (UDG) superfamily. UNG family.

Its subcellular location is the cytoplasm. The enzyme catalyses Hydrolyzes single-stranded DNA or mismatched double-stranded DNA and polynucleotides, releasing free uracil.. Excises uracil residues from the DNA which can arise as a result of misincorporation of dUMP residues by DNA polymerase or due to deamination of cytosine. This chain is Uracil-DNA glycosylase, found in Mycoplasmopsis pulmonis (strain UAB CTIP) (Mycoplasma pulmonis).